Here is a 118-residue protein sequence, read N- to C-terminus: V-type proton ATPase subunit G 2 (118 aa).

The stretch at 8 to 57 forms a coiled coil; that stretch reads IQQLLQAEKRAAEKVADARKRKARRLKQAKEEAQMEVDQYRREREQEFQS. Residues 25–90 form a disordered region; sequence ARKRKARRLK…VQGMQSSQQR (66 aa). A compositionally biased stretch (basic and acidic residues) spans 35–55; that stretch reads QAKEEAQMEVDQYRREREQEF. Composition is skewed to polar residues over residues 56 to 69 and 78 to 89; these read QSKQ…QGNL and RRQVQGMQSSQQ.

The protein belongs to the V-ATPase G subunit family. As to quaternary structure, V-ATPase is a heteromultimeric enzyme made up of two complexes: the ATP-hydrolytic V1 complex and the proton translocation V0 complex. The V1 complex consists of three catalytic AB heterodimers that form a heterohexamer, three peripheral stalks each consisting of EG heterodimers, one central rotor including subunits D and F, and the regulatory subunits C and H. The proton translocation complex V0 consists of the proton transport subunit a, a ring of proteolipid subunits c9c'', rotary subunit d, subunits e and f, and the accessory subunits ATP6AP1/Ac45 and ATP6AP2/PRR. In terms of tissue distribution, expressed in brain (at protein level).

The protein localises to the melanosome. Its subcellular location is the cytoplasmic vesicle. It localises to the clathrin-coated vesicle membrane. Functionally, subunit of the V1 complex of vacuolar(H+)-ATPase (V-ATPase), a multisubunit enzyme composed of a peripheral complex (V1) that hydrolyzes ATP and a membrane integral complex (V0) that translocates protons. V-ATPase is responsible for acidifying and maintaining the pH of intracellular compartments and in some cell types, is targeted to the plasma membrane, where it is responsible for acidifying the extracellular environment. This chain is V-type proton ATPase subunit G 2, found in Bos taurus (Bovine).